A 440-amino-acid polypeptide reads, in one-letter code: Transposon Ty1-A Gag polyprotein (440 aa).

Polar residues-rich tracts occupy residues 1–23 (MESQQLSQHSPISHGSACASVTS), 48–60 (TKANSQQTTTPAS), 71–93 (SPQTAQSHSPQNGPYPQQCMMTQ), and 127–152 (QSQFPQYPSSVGTPLSTPSPESGNTF). Disordered stretches follow at residues 1–93 (MESQ…MMTQ), 126–173 (PQSQ…RPPP), and 352–440 (GSRN…PETY). Residues 153-165 (TDSSSADSDMTST) show a composition bias toward low complexity. Positions 299–401 (NNGIHINNKV…NSKSKTARAH (103 aa)) are RNA-binding. A compositionally biased stretch (low complexity) spans 402-418 (NVSTSNNSPSTDNDSIS). The residue at position 416 (Ser-416) is a Phosphoserine. Polar residues predominate over residues 419–428 (KSTTEPIQLN). The span at 429 to 440 (NKHDLHLRPETY) shows a compositional bias: basic and acidic residues.

As to quaternary structure, homotrimer.

It is found in the cytoplasm. In terms of biological role, capsid protein (CA) is the structural component of the virus-like particle (VLP), forming the shell that encapsulates the retrotransposons dimeric RNA genome. The particles are assembled from trimer-clustered units and there are holes in the capsid shells that allow for the diffusion of macromolecules. CA also has nucleocapsid-like chaperone activity, promoting primer tRNA(i)-Met annealing to the multipartite primer-binding site (PBS), dimerization of Ty1 RNA and initiation of reverse transcription. In Saccharomyces cerevisiae (strain ATCC 204508 / S288c) (Baker's yeast), this protein is Transposon Ty1-A Gag polyprotein (TY1A-A).